A 507-amino-acid polypeptide reads, in one-letter code: ATP synthase subunit alpha, chloroplastic (507 aa).

170-177 lines the ATP pocket; that stretch reads GDRQTGKT.

It belongs to the ATPase alpha/beta chains family. In terms of assembly, F-type ATPases have 2 components, CF(1) - the catalytic core - and CF(0) - the membrane proton channel. CF(1) has five subunits: alpha(3), beta(3), gamma(1), delta(1), epsilon(1). CF(0) has four main subunits: a, b, b' and c.

It is found in the plastid. It localises to the chloroplast thylakoid membrane. It catalyses the reaction ATP + H2O + 4 H(+)(in) = ADP + phosphate + 5 H(+)(out). Its function is as follows. Produces ATP from ADP in the presence of a proton gradient across the membrane. The alpha chain is a regulatory subunit. In Spinacia oleracea (Spinach), this protein is ATP synthase subunit alpha, chloroplastic.